The primary structure comprises 298 residues: Mimecan (298 aa).

Positions 1 to 20 (MKTLQSTLLLLLFVPLIKPA) are cleaved as a signal peptide. Residue Asn88 is glycosylated (N-linked (GlcNAc...) (keratan sulfate) asparagine). LRR repeat units follow at residues 112–131 (DAVPPLPKESAYLYARFNKI), 132–155 (KKLTAKDFADIPNLRRLDFTGNLI), 156–179 (EDIEDGTFSKLSLLEELSLAENQL), 180–199 (LKLPVLPPKLTLFNAKYNKI), 200–225 (KSRGIKANAFKKLNNLTFLYLDHNAL), 226–246 (ESVPLNLPESLRVIHLQFNNI), and 247–277 (ASITDDTFCKANDTSYIRDRIEEIRLEGNPI). Asn214 carries an N-linked (GlcNAc...) (keratan sulfate) asparagine glycan. The cysteines at positions 255 and 288 are disulfide-linked. N-linked (GlcNAc...) (keratan sulfate) asparagine glycosylation is present at Asn258.

This sequence belongs to the small leucine-rich proteoglycan (SLRP) family. SLRP class III subfamily. In terms of processing, contains keratan sulfate.

The protein resides in the secreted. The protein localises to the extracellular space. It is found in the extracellular matrix. Functionally, induces bone formation in conjunction with TGF-beta-1 or TGF-beta-2. The protein is Mimecan (OGN) of Pongo abelii (Sumatran orangutan).